The sequence spans 701 residues: Glycine--tRNA ligase beta subunit (701 aa).

The protein belongs to the class-II aminoacyl-tRNA synthetase family. In terms of assembly, tetramer of two alpha and two beta subunits.

The protein resides in the cytoplasm. It catalyses the reaction tRNA(Gly) + glycine + ATP = glycyl-tRNA(Gly) + AMP + diphosphate. This chain is Glycine--tRNA ligase beta subunit, found in Bradyrhizobium sp. (strain BTAi1 / ATCC BAA-1182).